The following is a 112-amino-acid chain: Citrate synthase (112 aa).

Active-site residues include His39 and Asp97.

It belongs to the citrate synthase family.

It catalyses the reaction oxaloacetate + acetyl-CoA + H2O = citrate + CoA + H(+). The protein operates within carbohydrate metabolism; tricarboxylic acid cycle; isocitrate from oxaloacetate: step 1/2. This is Citrate synthase (gltA) from Bartonella vinsonii subsp. berkhoffii.